The primary structure comprises 419 residues: L-rhamnose isomerase (419 aa).

Positions 262, 294, and 296 each coordinate Mn(2+).

It belongs to the rhamnose isomerase family. Homotetramer. Mn(2+) serves as cofactor.

The protein resides in the cytoplasm. It carries out the reaction L-rhamnopyranose = L-rhamnulose. It participates in carbohydrate degradation; L-rhamnose degradation; glycerone phosphate from L-rhamnose: step 1/3. Its function is as follows. Catalyzes the interconversion of L-rhamnose and L-rhamnulose. In Escherichia coli O6:H1 (strain CFT073 / ATCC 700928 / UPEC), this protein is L-rhamnose isomerase.